Reading from the N-terminus, the 217-residue chain is ATP synthase subunit 4, mitochondrial (217 aa).

The transit peptide at 1-14 (MPFARVGALSARHY) directs the protein to the mitochondrion. A run of 2 helical transmembrane segments spans residues 41–61 (GVLATGVLGSIYAISNELYIV) and 66–86 (IVLGVFAAFVVVVAKLGGPGY).

As to quaternary structure, F-type ATP synthases have 2 components, the catalytic core F(1) and the membrane-embedded component F(0), linked together by a central stalk and a peripheral stalk. The central stalk, also called rotor shaft, is often seen as part of F(1). The peripheral stalk is seen as part of F(0). F(0) contains the membrane channel next to the rotor. F-type ATP synthases form dimers but each monomer functions independently in ATP generation. The dimer consists of 17 different polypeptides: ATP1 (subunit alpha, 3 molecules per monomer, part of F(1)), ATP2 (subunit beta, 3 copies per monomer, part of F(1)), ATP3 (subunit gamma, part of the central stalk), ATP4 (subunit b, part of the peripheral stalk), ATP5/OSCP (subunit 5/OSCP, part of the peripheral stalk), ATP6 (subunit a, part of the peripheral stalk), ATP7 (subunit d, part of the peripheral stalk), ATP8 (subunit 8, part of the peripheral stalk), OLI1 (subunit c, part of the rotor, 10 molecules per monomer), ATP14 (subunit h, part of the peripheral stalk), ATP15 (subunit epsilon, part of the central stalk), ATP16 (subunit delta, part of the central stalk), ATP17 (subunit f, part of the peripheral stalk), ATP18 (subunit i/j, part of the peripheral stalk), ATP19 (subunit k, dimer-specific, at interface between monomers), ATP20 (subunit g, at interface between monomers), TIM11 (subunit e, at interface between monomers).

It is found in the mitochondrion inner membrane. Its function is as follows. Mitochondrial membrane ATP synthase (F(1)F(0) ATP synthase or Complex V) produces ATP from ADP in the presence of a proton gradient across the membrane which is generated by electron transport complexes of the respiratory chain. F-type ATP synthases consist of two structural domains, F(1) - containing the extramembraneous catalytic core, and F(0) - containing the membrane proton channel, linked together by a central stalk and a peripheral stalk. During catalysis, ATP synthesis in the catalytic domain of F(1) is coupled via a rotary mechanism of the central stalk subunits to proton translocation. Part of the complex F(0) domain and the peripheral stalk, which acts as a stator to hold the catalytic alpha/ATP1(3)beta/ATP2(3) subcomplex and subunit a/ATP6 static relative to the rotary elements. The chain is ATP synthase subunit 4, mitochondrial from Yarrowia lipolytica (strain CLIB 122 / E 150) (Yeast).